The sequence spans 294 residues: Nucleoside-specific channel-forming protein Tsx (294 aa).

A signal peptide spans M1–A22.

Belongs to the nucleoside-specific channel-forming outer membrane porin (Tsx) (TC 1.B.10) family.

Its subcellular location is the cell outer membrane. In terms of biological role, functions as a substrate-specific channel for nucleosides and deoxynucleosides. Also functions in albicidin uptake and as receptor for colicin K. Also is a receptor for several Tsx-specific bacteriophages. In Klebsiella aerogenes (strain ATCC 13048 / DSM 30053 / CCUG 1429 / JCM 1235 / KCTC 2190 / NBRC 13534 / NCIMB 10102 / NCTC 10006 / CDC 819-56) (Enterobacter aerogenes), this protein is Nucleoside-specific channel-forming protein Tsx.